A 240-amino-acid chain; its full sequence is Intestine-specific homeobox (240 aa).

The segment at 36-82 (PTERRSLPRPQSICKEDSRQTTIPGSKLERPPQDQPQEEKKNKRRVR) is disordered. A compositionally biased stretch (basic and acidic residues) spans 62–76 (KLERPPQDQPQEEKK). A DNA-binding region (homeobox) is located at residues 78–137 (KRRVRTTFTTEQLQELEKLFHFTHYPDIHVRSQLASRINLPEARVQIWFQNQRAKWRKQE).

In terms of tissue distribution, expressed in intestinal epithelial cells from the duodenum to the proximal colon.

The protein resides in the nucleus. In terms of biological role, transcription factor that regulates gene expression in intestine. May participate in vitamin A metabolism most likely by regulating BCO1 expression in the intestine. This Mus musculus (Mouse) protein is Intestine-specific homeobox (Isx).